The primary structure comprises 627 residues: Coiled-coil domain-containing protein 22 (627 aa).

Positions 1–321 are sufficient for interaction with COMMD1; it reads MEEADRILIH…VADVPATSQR (321 aa). The sufficicient and required for interaction with CCDC93 stretch occupies residues 1-447; the sequence is MEEADRILIH…LQDCRELESS (447 aa). At serine 410 the chain carries Phosphoserine. Residues 448–535 are a coiled coil; that stretch reads RRLAEIQELH…NSLSGKLDRT (88 aa).

This sequence belongs to the CCDC22 family. As to quaternary structure, component of the commander complex consisting of the CCC subcomplex and the retriever subcomplex. Component of the CCC (COMMD/CCDC22/CCDC93) subcomplex consisting of COMMD1, COMMD2, COMMD3, COMMD4, COMMD5, COMMD6, COMMD7, COMMD8, COMMD9, COMMD10, CCDC22 and CCDC93. Forms a coiled-coil heterodimer with CCDC22; this heterodimer interacts with the guanine nucleotide exchange factor DENND10; the interaction is direct. Interacts with CUL1, CUL2, CUL3, SKP1, BTRC. Interacts with SNX17 and SNX31. Interacts with CPNE1 and CPNE4.

It localises to the endosome. Its subcellular location is the cytoplasm. The protein resides in the cytoskeleton. It is found in the microtubule organizing center. The protein localises to the centrosome. Functionally, component of the commander complex that is essential for endosomal recycling of transmembrane cargos; the Commander complex is composed of composed of the CCC subcomplex and the retriever subcomplex. Component of the CCC complex, which is involved in the regulation of endosomal recycling of surface proteins, including integrins, signaling receptor and channels. Involved in regulation of NF-kappa-B signaling. Promotes ubiquitination of I-kappa-B-kinase subunit IKBKB and its subsequent proteasomal degradation leading to NF-kappa-B activation; the function may involve association with COMMD8 and a CUL1-dependent E3 ubiquitin ligase complex. May down-regulate NF-kappa-B activity via association with COMMD1 and involving a CUL2-dependent E3 ubiquitin ligase complex. Regulates the cellular localization of COMM domain-containing proteins, such as COMMD1 and COMMD10. Component of the CCC complex, which is involved in the regulation of endosomal recycling of surface proteins, including integrins, signaling receptor and channels. The CCC complex associates with SNX17, retriever and WASH complexes to prevent lysosomal degradation and promote cell surface recycling of numerous cargos such as integrins ITGA5:ITGB1. Plays a role in copper ion homeostasis. Involved in copper-dependent ATP7A trafficking between the trans-Golgi network and vesicles in the cell periphery; the function is proposed to depend on its association within the CCC complex and cooperation with the WASH complex on early endosomes. In Mus musculus (Mouse), this protein is Coiled-coil domain-containing protein 22 (Ccdc22).